The primary structure comprises 157 residues: Ribosomal RNA large subunit methyltransferase H (157 aa).

S-adenosyl-L-methionine is bound by residues L73, G105, and 124-129 (LSRMTF).

This sequence belongs to the RNA methyltransferase RlmH family. In terms of assembly, homodimer.

The protein localises to the cytoplasm. It catalyses the reaction pseudouridine(1915) in 23S rRNA + S-adenosyl-L-methionine = N(3)-methylpseudouridine(1915) in 23S rRNA + S-adenosyl-L-homocysteine + H(+). Its function is as follows. Specifically methylates the pseudouridine at position 1915 (m3Psi1915) in 23S rRNA. This Porphyromonas gingivalis (strain ATCC BAA-308 / W83) protein is Ribosomal RNA large subunit methyltransferase H.